Here is a 379-residue protein sequence, read N- to C-terminus: Cathepsin B-like protease 1 (379 aa).

The signal sequence occupies residues 1–30 (MADSCCIRLHLLASVFLLLFSSFNLQGIAA). Residues 31-102 (ENLSKQKLTS…PIVRHDLSLK (72 aa)) constitute a propeptide, activation peptide. N-linked (GlcNAc...) asparagine glycosylation is found at N32 and N69. 6 disulfide bridges follow: C116/C165, C148/C191, C182/C236, C183/C187, C213/C240, and C222/C227. C151 is a catalytic residue. N171 carries an N-linked (GlcNAc...) asparagine glycan. Active-site residues include H306 and N327. A glycan (N-linked (GlcNAc...) asparagine) is linked at N330. The propeptide at 363–379 (NVFKGITTSDDLLVSSV) is removed in mature form.

Belongs to the peptidase C1 family.

Its function is as follows. Thiol protease that plays a central role in plant programmed cell death (PCD). In addition to its role in protein degradation, may cleave and/or degrade a number of target proteins, activating signaling towards PCD. Contributes to the increase of caspase-3-like activity after UV-C-induced PCD and is required for abiotic stress-induced PCD. Functions redundantly with CATHB2 and CATHB3 in basal defense and distinct forms of plant programmed cell death (PCD). Participates in the establishment of basal resistance against the bacterial pathogen Pseudomonase syringae pv. tomato DC3000. Required for full levels of PCD during resistance (R) gene-mediated hypersensitive response (HR). Involved in the regulation of senescence, a developmental form of PCD in plants. This Arabidopsis thaliana (Mouse-ear cress) protein is Cathepsin B-like protease 1.